Consider the following 155-residue polypeptide: Ribosomal RNA large subunit methyltransferase H (155 aa).

Residues L72, G103, and 122–127 contribute to the S-adenosyl-L-methionine site; that span reads LSPLTL.

It belongs to the RNA methyltransferase RlmH family. Homodimer.

It localises to the cytoplasm. It catalyses the reaction pseudouridine(1915) in 23S rRNA + S-adenosyl-L-methionine = N(3)-methylpseudouridine(1915) in 23S rRNA + S-adenosyl-L-homocysteine + H(+). Functionally, specifically methylates the pseudouridine at position 1915 (m3Psi1915) in 23S rRNA. In Actinobacillus pleuropneumoniae serotype 5b (strain L20), this protein is Ribosomal RNA large subunit methyltransferase H.